The following is a 394-amino-acid chain: Phosphoglycerate kinase (394 aa).

Residues 21-23 (DFN), Arg-36, 59-62 (HLGR), Arg-118, and Arg-151 contribute to the substrate site. Ser-183 is subject to Phosphoserine. Positions 201 and 292 each coordinate ATP. Thr-299 carries the phosphothreonine modification. ATP-binding positions include Glu-323 and 350–353 (GGDS).

The protein belongs to the phosphoglycerate kinase family. Monomer.

It localises to the cytoplasm. It carries out the reaction (2R)-3-phosphoglycerate + ATP = (2R)-3-phospho-glyceroyl phosphate + ADP. It participates in carbohydrate degradation; glycolysis; pyruvate from D-glyceraldehyde 3-phosphate: step 2/5. The polypeptide is Phosphoglycerate kinase (Bacillus cereus (strain ATCC 10987 / NRS 248)).